The chain runs to 204 residues: uncharacterized protein (204 aa).

H9 (tele-phosphohistidine intermediate) is an active-site residue. The active-site Proton donor/acceptor is E86.

It belongs to the phosphoglycerate mutase family.

This is an uncharacterized protein from Acanthamoeba polyphaga (Amoeba).